A 494-amino-acid polypeptide reads, in one-letter code: GDP-fucose protein O-fucosyltransferase 4 (494 aa).

The Cytoplasmic portion of the chain corresponds to 1-7 (MAARYTE). The helical; Signal-anchor for type II membrane protein transmembrane segment at 8 to 24 (AVLAALGVLSVCSASSS) threads the bilayer. Topologically, residues 25 to 494 (SGSGASGKAG…EIFMKRNKNL (470 aa)) are lumenal. Asn167 is a glycosylation site (N-linked (GlcNAc...) asparagine). Cys390 and Cys393 are disulfide-bonded.

It belongs to the glycosyltransferase 10 family.

The protein resides in the endoplasmic reticulum membrane. It carries out the reaction L-threonyl-[protein] + GDP-beta-L-fucose = 3-O-(alpha-L-fucosyl)-L-threonyl-[protein] + GDP + H(+). The catalysed reaction is L-seryl-[protein] + GDP-beta-L-fucose = 3-O-(alpha-L-fucosyl)-L-seryl-[protein] + GDP + H(+). It functions in the pathway protein modification; protein glycosylation. Its function is as follows. Protein O-fucosyltransferase that specifically catalyzes O-fucosylation of serine or threonine residues in EMI domains of target proteins, such as MMRN1, MMRN2 and EMID1. Attaches fucose through an O-glycosidic linkage. O-fucosylation of EMI domain-containing proteins may be required for facilitating protein folding and secretion. Also shows minor alpha-(1,3)-fucosyltransferase activity toward activity toward biantennary N-glycan acceptors. However, this was tested with a library of synthetic substrates and this activity is unsure in vivo. This is GDP-fucose protein O-fucosyltransferase 4 (Fut11) from Rattus norvegicus (Rat).